The chain runs to 223 residues: Ras-related protein Rab-37 (223 aa).

The disordered stretch occupies residues 1–23 (MTGTPGAVATRDGEAPERSPPCS). Thr-2 carries the N-acetylthreonine modification. GTP contacts are provided by Thr-38, Gly-39, Val-40, Gly-41, Lys-42, Thr-43, Cys-44, and Thr-62. A Mg(2+)-binding site is contributed by Thr-43. 2 short sequence motifs (switch) span residues 52 to 67 (GAFL…GIDF) and 85 to 102 (DTAG…YYRD). Mg(2+)-binding residues include Thr-62 and Asp-85. The GTP site is built by Gly-88, Asn-143, Lys-144, Asp-146, Met-147, Ser-173, Ala-174, and Lys-175. S-geranylgeranyl cysteine attachment occurs at residues Cys-219 and Cys-220. The residue at position 220 (Cys-220) is a Cysteine methyl ester. Residues 221 to 223 (SFM) constitute a propeptide, removed in mature form.

This sequence belongs to the small GTPase superfamily. Rab family. In terms of assembly, interacts with RIMS1. Interacts (in GDP-bound form) with RPGR, RPGR functions as guanine exchange factor (GEF). Requires Mg(2+) as cofactor.

The protein resides in the cytoplasmic vesicle. It localises to the cell projection. The protein localises to the cilium. The catalysed reaction is GTP + H2O = GDP + phosphate + H(+). Regulated by guanine nucleotide exchange factors (GEFs) including RPGR which promote the exchange of bound GDP for free GTP. Regulated by GTPase activating proteins (GAPs) which increase the GTP hydrolysis activity. Inhibited by GDP dissociation inhibitors (GDIs). The small GTPases Rab are key regulators of intracellular membrane trafficking, from the formation of transport vesicles to their fusion with membranes. Rabs cycle between an inactive GDP-bound form and an active GTP-bound form that is able to recruit to membranes different sets of downstream effectors directly responsible for vesicle formation, movement, tethering and fusion. Acts as an organizer for autophagosome biogenesis in a GTP-dependent manner. Involved in retinal homeostasis by autophagy regulation. This is Ras-related protein Rab-37 from Homo sapiens (Human).